The following is a 323-amino-acid chain: NLIGLLTLLYAGTTWKILDKSFCFKYSKKNTRLVFIFIVKMLKQLSISAGNLLNKGTSETLRNEITTKKVSIHLPKHLKPANDSQFGHYLAGLIDGDGHFSSKQQLIIAFHSLDIQLAYYIKKQIGYGIVRKIKDKNAILFIIANSKGIERVITLINNKFRTTSKYNQIINNIFAHPRFKEFSKTITLGLNSNNNLNNHWLAGFSDADASFQIKILNRDKKIEVRLNYQIDQKKEYLLSLIKDNLGGNIGYRKSQDTYYYGSTSFGSAKKVINYFDNYHLLSSKYISYLKWRKAYLIIQENKHLTESGLSQIKKPHPYRKNIN.

The protein resides in the mitochondrion. This is an uncharacterized protein from Schizosaccharomyces pombe (strain 972 / ATCC 24843) (Fission yeast).